Consider the following 284-residue polypeptide: Tropomyosin (284 aa).

Residues 1–284 (MDAIKKKMQA…DMTFTELIGN (284 aa)) adopt a coiled-coil conformation.

This sequence belongs to the tropomyosin family. As to quaternary structure, homodimer.

Tropomyosin, in association with the troponin complex, plays a central role in the calcium dependent regulation of muscle contraction. The protein is Tropomyosin of Blattella germanica (German cockroach).